The chain runs to 72 residues: Translation initiation factor IF-1 (72 aa).

Residues 1–72 form the S1-like domain; it reads MAKEDVIEVE…TRGRITYRYK (72 aa). Residue tyrosine 60 is modified to Phosphotyrosine.

It belongs to the IF-1 family. In terms of assembly, component of the 30S ribosomal translation pre-initiation complex which assembles on the 30S ribosome in the order IF-2 and IF-3, IF-1 and N-formylmethionyl-tRNA(fMet); mRNA recruitment can occur at any time during PIC assembly.

Its subcellular location is the cytoplasm. One of the essential components for the initiation of protein synthesis. Stabilizes the binding of IF-2 and IF-3 on the 30S subunit to which N-formylmethionyl-tRNA(fMet) subsequently binds. Helps modulate mRNA selection, yielding the 30S pre-initiation complex (PIC). Upon addition of the 50S ribosomal subunit IF-1, IF-2 and IF-3 are released leaving the mature 70S translation initiation complex. This chain is Translation initiation factor IF-1, found in Shouchella clausii (strain KSM-K16) (Alkalihalobacillus clausii).